Consider the following 71-residue polypeptide: UPF0352 protein Asuc_0778 (71 aa).

It belongs to the UPF0352 family.

This is UPF0352 protein Asuc_0778 from Actinobacillus succinogenes (strain ATCC 55618 / DSM 22257 / CCUG 43843 / 130Z).